A 358-amino-acid chain; its full sequence is Aminomethyltransferase (358 aa).

It belongs to the GcvT family. As to quaternary structure, the glycine cleavage system is composed of four proteins: P, T, L and H.

It catalyses the reaction N(6)-[(R)-S(8)-aminomethyldihydrolipoyl]-L-lysyl-[protein] + (6S)-5,6,7,8-tetrahydrofolate = N(6)-[(R)-dihydrolipoyl]-L-lysyl-[protein] + (6R)-5,10-methylene-5,6,7,8-tetrahydrofolate + NH4(+). Its function is as follows. The glycine cleavage system catalyzes the degradation of glycine. The protein is Aminomethyltransferase of Francisella tularensis subsp. holarctica (strain FTNF002-00 / FTA).